The sequence spans 199 residues: Inner membrane-spanning protein YciB (199 aa).

Helical transmembrane passes span 7–27 (HPLF…AANA), 32–52 (FVAT…SYVV), 56–76 (IPLM…LTLV), 93–113 (LFAG…AIMF), 126–146 (VLTL…ELIW), and 153–173 (FWVN…AMMQ).

This sequence belongs to the YciB family.

It is found in the cell inner membrane. Its function is as follows. Plays a role in cell envelope biogenesis, maintenance of cell envelope integrity and membrane homeostasis. In Nitrobacter hamburgensis (strain DSM 10229 / NCIMB 13809 / X14), this protein is Inner membrane-spanning protein YciB.